A 449-amino-acid chain; its full sequence is Xylose isomerase (449 aa).

Residues His103 and Asp106 contribute to the active site. Residues Glu234, Glu270, His273, Asp298, Asp309, Asp311, and Asp342 each contribute to the Mg(2+) site.

Belongs to the xylose isomerase family. Homotetramer. It depends on Mg(2+) as a cofactor.

It is found in the cytoplasm. It catalyses the reaction alpha-D-xylose = alpha-D-xylulofuranose. The protein is Xylose isomerase of Levilactobacillus brevis (Lactobacillus brevis).